We begin with the raw amino-acid sequence, 144 residues long: Large ribosomal subunit protein uL15 (144 aa).

Residues 1–52 form a disordered region; the sequence is MRLNTLSPAEGAKHAPKRVGRGIGSGLGKTAGRGHKGQNSRSGGGVRRGFEG. The segment covering 21–31 has biased composition (gly residues); it reads RGIGSGLGKTA.

This sequence belongs to the universal ribosomal protein uL15 family. As to quaternary structure, part of the 50S ribosomal subunit.

Functionally, binds to the 23S rRNA. In Yersinia enterocolitica serotype O:8 / biotype 1B (strain NCTC 13174 / 8081), this protein is Large ribosomal subunit protein uL15.